The sequence spans 104 residues: Urease subunit beta (104 aa).

Belongs to the urease beta subunit family. As to quaternary structure, heterotrimer of UreA (gamma), UreB (beta) and UreC (alpha) subunits. Three heterotrimers associate to form the active enzyme.

The protein resides in the cytoplasm. The enzyme catalyses urea + 2 H2O + H(+) = hydrogencarbonate + 2 NH4(+). It functions in the pathway nitrogen metabolism; urea degradation; CO(2) and NH(3) from urea (urease route): step 1/1. The sequence is that of Urease subunit beta from Synechococcus sp. (strain RCC307).